A 235-amino-acid chain; its full sequence is Voltage-gated hydrogen channel 1 (235 aa).

The Cytoplasmic segment spans residues 1–62 (MSRYLKHFTV…VMKKLFSSRR (62 aa)). Residues 63–83 (FQIVIVFLVIVDALLVLGELL) traverse the membrane as a helical segment. Topologically, residues 84 to 100 (MDLKIIHPDKYHIAPKV) are extracellular. Residues 101 to 123 (FHYLSLSILTIFLVEVGFKIFVY) traverse the membrane as a helical segment. At 124 to 131 (GREFFHHK) the chain is on the cytoplasmic side. Residues 132 to 152 (FEVLDSIVVVVSFILDLVLLF) form a helical membrane-spanning segment. Topologically, residues 153–159 (REHEFEA) are extracellular. Residues 160-180 (VGLLILLRLWRVARIINGIIL) traverse the membrane as a helical segment. At 181-235 (SVKTRSEQQVSKLKQVNLKLATKVEQLQHSCVEKEQEIERLTRMLKQHGLLSEQT) the chain is on the cytoplasmic side. Residues 187-228 (EQQVSKLKQVNLKLATKVEQLQHSCVEKEQEIERLTRMLKQH) are a coiled coil.

The protein belongs to the hydrogen channel family. As to quaternary structure, homodimer.

It is found in the membrane. The protein resides in the cell membrane. Mediates the voltage-dependent proton permeability of excitable membranes. Forms a proton-selective channel through which protons may pass in accordance with their electrochemical gradient. The chain is Voltage-gated hydrogen channel 1 (HVCN1) from Gallus gallus (Chicken).